The chain runs to 835 residues: Microcephalin (835 aa).

In terms of domain architecture, BRCT 1 spans 1–93 (MAAPILKDVV…AHIDESLFPA (93 aa)). Residues 184 to 206 (KEKRENLSPTSSQLIQQSHDNPS) are disordered. Over residues 190–206 (LSPTSSQLIQQSHDNPS) the composition is skewed to polar residues. Residues serine 279, serine 287, serine 296, and serine 333 each carry the phosphoserine modification. Residue threonine 335 is modified to Phosphothreonine. Basic residues predominate over residues 346–361 (HSRPRSSSVKRKRVSH). Disordered stretches follow at residues 346–376 (HSRP…RKRS) and 418–442 (PDNL…PAQF). Residue serine 548 is modified to Phosphoserine. Positions 557 to 582 (GLKSTQNRGTTSKISNSSEGEAQSEH) are disordered. Over residues 559 to 577 (KSTQNRGTTSKISNSSEGE) the composition is skewed to polar residues. BRCT domains follow at residues 640-730 (SGRG…PFEL) and 751-833 (YRGT…NYLL).

As to quaternary structure, interacts with CDC27 and maybe other components of the APC/C complex. Interacts with histone variant H2AX under DNA damage conditions.

Its subcellular location is the cytoplasm. It is found in the cytoskeleton. It localises to the microtubule organizing center. The protein resides in the centrosome. Implicated in chromosome condensation and DNA damage induced cellular responses. May play a role in neurogenesis and regulation of the size of the cerebral cortex. The chain is Microcephalin from Gorilla gorilla gorilla (Western lowland gorilla).